The sequence spans 138 residues: ATP synthase epsilon chain (138 aa).

This sequence belongs to the ATPase epsilon chain family. In terms of assembly, F-type ATPases have 2 components, CF(1) - the catalytic core - and CF(0) - the membrane proton channel. CF(1) has five subunits: alpha(3), beta(3), gamma(1), delta(1), epsilon(1). CF(0) has three main subunits: a, b and c.

The protein localises to the cell membrane. Its function is as follows. Produces ATP from ADP in the presence of a proton gradient across the membrane. This is ATP synthase epsilon chain from Streptococcus pyogenes serotype M2 (strain MGAS10270).